A 371-amino-acid chain; its full sequence is Tetraacyldisaccharide 4'-kinase (371 aa).

63-70 contributes to the ATP binding site; that stretch reads AVGGAGKT.

This sequence belongs to the LpxK family.

It carries out the reaction a lipid A disaccharide + ATP = a lipid IVA + ADP + H(+). Its pathway is glycolipid biosynthesis; lipid IV(A) biosynthesis; lipid IV(A) from (3R)-3-hydroxytetradecanoyl-[acyl-carrier-protein] and UDP-N-acetyl-alpha-D-glucosamine: step 6/6. Its function is as follows. Transfers the gamma-phosphate of ATP to the 4'-position of a tetraacyldisaccharide 1-phosphate intermediate (termed DS-1-P) to form tetraacyldisaccharide 1,4'-bis-phosphate (lipid IVA). This is Tetraacyldisaccharide 4'-kinase from Anaeromyxobacter sp. (strain Fw109-5).